The following is a 77-amino-acid chain: Large ribosomal subunit protein bL28 (77 aa).

Belongs to the bacterial ribosomal protein bL28 family.

In Polynucleobacter necessarius subsp. necessarius (strain STIR1), this protein is Large ribosomal subunit protein bL28.